Here is a 473-residue protein sequence, read N- to C-terminus: Photosystem II CP43 reaction center protein (473 aa).

Residues 1-14 (MKNLYSLRRFYHVE) constitute a propeptide that is removed on maturation. Residue T15 is modified to N-acetylthreonine. Position 15 is a phosphothreonine (T15). Transmembrane regions (helical) follow at residues 69–93 (LFEVAHFVPEKPMYEQGLILLPHLA), 134–155 (LIGPETLEESFPFFGYVWKDKN), 178–200 (KARYLGGVYDTWAPGGGDVRVIT), 255–275 (KPFGWARRAFVWSGEAYLSYS), and 291–312 (WFNNTVYPSEFYGPTGPEASQA). E367 serves as a coordination point for [CaMn4O5] cluster. A helical membrane pass occupies residues 447–471 (RARAAAAGFEKGIDRDTEPTLFMRP).

The protein belongs to the PsbB/PsbC family. PsbC subfamily. As to quaternary structure, PSII is composed of 1 copy each of membrane proteins PsbA, PsbB, PsbC, PsbD, PsbE, PsbF, PsbH, PsbI, PsbJ, PsbK, PsbL, PsbM, PsbT, PsbX, PsbY, PsbZ, Psb30/Ycf12, at least 3 peripheral proteins of the oxygen-evolving complex and a large number of cofactors. It forms dimeric complexes. It depends on Binds multiple chlorophylls and provides some of the ligands for the Ca-4Mn-5O cluster of the oxygen-evolving complex. It may also provide a ligand for a Cl- that is required for oxygen evolution. PSII binds additional chlorophylls, carotenoids and specific lipids. as a cofactor.

Its subcellular location is the plastid. It localises to the chloroplast thylakoid membrane. In terms of biological role, one of the components of the core complex of photosystem II (PSII). It binds chlorophyll and helps catalyze the primary light-induced photochemical processes of PSII. PSII is a light-driven water:plastoquinone oxidoreductase, using light energy to abstract electrons from H(2)O, generating O(2) and a proton gradient subsequently used for ATP formation. This is Photosystem II CP43 reaction center protein from Nephroselmis olivacea (Green alga).